The sequence spans 195 residues: Imidazoleglycerol-phosphate dehydratase (195 aa).

The protein belongs to the imidazoleglycerol-phosphate dehydratase family.

It is found in the cytoplasm. It carries out the reaction D-erythro-1-(imidazol-4-yl)glycerol 3-phosphate = 3-(imidazol-4-yl)-2-oxopropyl phosphate + H2O. The protein operates within amino-acid biosynthesis; L-histidine biosynthesis; L-histidine from 5-phospho-alpha-D-ribose 1-diphosphate: step 6/9. The chain is Imidazoleglycerol-phosphate dehydratase from Roseobacter denitrificans (strain ATCC 33942 / OCh 114) (Erythrobacter sp. (strain OCh 114)).